The sequence spans 331 residues: UDP-GalNAc:beta-1,3-N-acetylgalactosaminyltransferase 1 (331 aa).

Residues 1–20 (MASALWTVLPSRMSLRSLQW) are Cytoplasmic-facing. Residues 21-43 (SLLLLSLLSFLVMWYLSLPHYNV) traverse the membrane as a helical; Signal-anchor for type II membrane protein segment. The Lumenal segment spans residues 44-331 (IERVNWMYFY…VMLRNTTCHY (288 aa)). N72, N154, N198, N212, and N326 each carry an N-linked (GlcNAc...) asparagine glycan.

This sequence belongs to the glycosyltransferase 31 family. It depends on Mg(2+) as a cofactor.

Its subcellular location is the golgi apparatus membrane. It carries out the reaction a globoside Gb3Cer (d18:1(4E)) + UDP-N-acetyl-alpha-D-galactosamine = a globoside Gb4Cer (d18:1(4E)) + UDP + H(+). Its pathway is protein modification; protein glycosylation. Functionally, transfers N-acetylgalactosamine onto globotriaosylceramide. Plays a critical role in preimplantation stage embryonic development. The polypeptide is UDP-GalNAc:beta-1,3-N-acetylgalactosaminyltransferase 1 (B3GALNT1) (Pongo abelii (Sumatran orangutan)).